The following is a 293-amino-acid chain: 4-hydroxy-tetrahydrodipicolinate synthase (293 aa).

Residue Thr47 coordinates pyruvate. Residue Tyr135 is the Proton donor/acceptor of the active site. Lys163 functions as the Schiff-base intermediate with substrate in the catalytic mechanism. Position 205 (Val205) interacts with pyruvate.

This sequence belongs to the DapA family. As to quaternary structure, homotetramer; dimer of dimers.

Its subcellular location is the cytoplasm. The enzyme catalyses L-aspartate 4-semialdehyde + pyruvate = (2S,4S)-4-hydroxy-2,3,4,5-tetrahydrodipicolinate + H2O + H(+). It functions in the pathway amino-acid biosynthesis; L-lysine biosynthesis via DAP pathway; (S)-tetrahydrodipicolinate from L-aspartate: step 3/4. Its function is as follows. Catalyzes the condensation of (S)-aspartate-beta-semialdehyde [(S)-ASA] and pyruvate to 4-hydroxy-tetrahydrodipicolinate (HTPA). The chain is 4-hydroxy-tetrahydrodipicolinate synthase from Leptothrix cholodnii (strain ATCC 51168 / LMG 8142 / SP-6) (Leptothrix discophora (strain SP-6)).